We begin with the raw amino-acid sequence, 482 residues long: NADH-quinone oxidoreductase subunit N (482 aa).

13 consecutive transmembrane segments (helical) span residues 10–30 (ALGPALPELILTVGALVLILY), 44–64 (VGAIIVLIVALFSVVSQPLGA), 77–97 (GFARVMKTLTLVGSLAALLLA), 113–133 (ILIVLSSIGMLIMASANDLIG), 166–186 (FVLGALSSGMLLYGASLVYGF), 206–226 (LGLVLGIVFVAAGVAFKLAAV), 243–265 (VTAFFASAPKMAAMAMTVRVFIG), 277–296 (IIVFIAIASMALGSFAAIGQ), 302–322 (LMAYSSIGNVGYALIGLAAGT), 328–348 (GVVVYMAIYLAMTLGAFAVIL), 374–394 (AFCLAMMMFSLAGIPPLAGFF), 397–417 (FYVFAAAIKAGLNVLAVIGVV), and 451–471 (IVLAASSVVVVLFWIVPAPLV).

Belongs to the complex I subunit 2 family. As to quaternary structure, NDH-1 is composed of 14 different subunits. Subunits NuoA, H, J, K, L, M, N constitute the membrane sector of the complex.

The protein resides in the cell inner membrane. The enzyme catalyses a quinone + NADH + 5 H(+)(in) = a quinol + NAD(+) + 4 H(+)(out). In terms of biological role, NDH-1 shuttles electrons from NADH, via FMN and iron-sulfur (Fe-S) centers, to quinones in the respiratory chain. The immediate electron acceptor for the enzyme in this species is believed to be ubiquinone. Couples the redox reaction to proton translocation (for every two electrons transferred, four hydrogen ions are translocated across the cytoplasmic membrane), and thus conserves the redox energy in a proton gradient. The sequence is that of NADH-quinone oxidoreductase subunit N from Methylobacterium nodulans (strain LMG 21967 / CNCM I-2342 / ORS 2060).